Consider the following 328-residue polypeptide: Formimidoylglutamase (328 aa).

H133, D159, H161, D163, D253, and D255 together coordinate Mn(2+).

The protein belongs to the arginase family. Mn(2+) is required as a cofactor.

It carries out the reaction N-formimidoyl-L-glutamate + H2O = formamide + L-glutamate. Its pathway is amino-acid degradation; L-histidine degradation into L-glutamate; L-glutamate from N-formimidoyl-L-glutamate (hydrolase route): step 1/1. In terms of biological role, catalyzes the conversion of N-formimidoyl-L-glutamate to L-glutamate and formamide. This chain is Formimidoylglutamase, found in Streptococcus pyogenes serotype M28 (strain MGAS6180).